A 447-amino-acid chain; its full sequence is NADH-ubiquinone oxidoreductase chain 4 (447 aa).

Transmembrane regions (helical) follow at residues 4–24 (LLLLIMLNMLMMSMIYLFMLF), 34–54 (LIIGNLIIINLLLNLFNLNWI), 67–87 (MYSYGLIMLTLWIFGLIFISL), 100–120 (LLMISLLLVFLSMNLLLFYLF), 149–169 (MFYTMIFSLPMLYIIYYIYLI), 189–209 (LFIYLLMSFLVKIPIYLFHGW), 223–243 (MILASIMLKLGGYGMLRLMII), 248–268 (FILIQKILVMINSFGVLILSL), 279–299 (IIAISSIVHMGLMIMSMMTFL), 304–324 (IGGYLMMISHGLSSSGLFFLV), 349–371 (MSLLWFMLCSSNMGSPVSLNLIS), 388–408 (LILMMYCLFSFIYSIYLFMFI), and 422–442 (GILVEYFVLLLHWIPLNLMFL).

It belongs to the complex I subunit 4 family.

It is found in the mitochondrion membrane. It carries out the reaction a ubiquinone + NADH + 5 H(+)(in) = a ubiquinol + NAD(+) + 4 H(+)(out). Its function is as follows. Core subunit of the mitochondrial membrane respiratory chain NADH dehydrogenase (Complex I) that is believed to belong to the minimal assembly required for catalysis. Complex I functions in the transfer of electrons from NADH to the respiratory chain. The immediate electron acceptor for the enzyme is believed to be ubiquinone. The chain is NADH-ubiquinone oxidoreductase chain 4 (ND4) from Apis mellifera ligustica (Common honeybee).